Reading from the N-terminus, the 315-residue chain is MSCATKPIIKPSSMATNSCLISLPPLFATTTKSKSFAYPYLSNTLKPIKLLHLSCTYSPCILSPKKKTSVSALQEEENTLILDGQGQESGDLFNFEPSGEETEEEGFVEAVGDAGESDEVEADEEEEEFQEPPEDAKLFVGNLPYDVDSEGLARLFEQAGVVEIAEVIYNRDTDQSRGFGFVTMSTVEEAEKAVEMYNRYDVNGRLLTVNKAARRGERPERPPRTFEQSYRIYVGNIPWGIDDARLEQLFSEHGKVVSARVVYDRETGRSRGFGFVTMASEAEMSDAIANLDGQSLDGRTIRVNVAEDRSRRNTF.

Residues 1–71 constitute a chloroplast transit peptide; it reads MSCATKPIIK…LSPKKKTSVS (71 aa). Residues 114 to 133 form a disordered region; sequence AGESDEVEADEEEEEFQEPP. Positions 115–133 are enriched in acidic residues; it reads GESDEVEADEEEEEFQEPP. RRM domains lie at 136–214 and 230–308; these read AKLF…KAAR and YRIY…VAED.

The protein localises to the plastid. It localises to the chloroplast. Could be involved in splicing and/or processing of chloroplast RNA's. The polypeptide is 31 kDa ribonucleoprotein, chloroplastic (Nicotiana sylvestris (Wood tobacco)).